Here is a 121-residue protein sequence, read N- to C-terminus: Lysozyme (121 aa).

Residues Lys1–Cys121 enclose the C-type lysozyme domain. 4 disulfides stabilise this stretch: Cys6/Cys121, Cys27/Cys110, Cys62/Cys76, and Cys72/Cys90. Catalysis depends on residues Glu32 and Asp50.

Belongs to the glycosyl hydrolase 22 family.

It catalyses the reaction Hydrolysis of (1-&gt;4)-beta-linkages between N-acetylmuramic acid and N-acetyl-D-glucosamine residues in a peptidoglycan and between N-acetyl-D-glucosamine residues in chitodextrins.. Functionally, lysozymes have primarily a bacteriolytic function; those in tissues and body fluids are associated with the monocyte-macrophage system and enhance the activity of immunoagents. The protein is Lysozyme of Galleria mellonella (Greater wax moth).